The sequence spans 985 residues: Rho guanine nucleotide exchange factor 2 (985 aa).

The interval 1-32 (MSRIESLTRARIDRSKEQATKTREKEKMKEAK) is disordered. A Phorbol-ester/DAG-type zinc finger spans residues 39–86 (GHLFTTISVSGMTMCYACNKSITAKEALICPTCNVTIHNRCKDTLANC). Phosphoserine occurs at positions 109, 122, 129, 133, and 137. The interval 131–161 (RQSLLGSRRGLSSLSLAKSVSTTNIAGHFND) is interaction with DYNLT1. Serine 143 is modified (phosphoserine; by PAK4). Residues serine 151, serine 163, serine 172, serine 174, and serine 177 each carry the phosphoserine modification. Residues 236–433 (KKQDVIYELI…KELLSNVDQD (198 aa)) form the DH domain. The residue at position 354 (lysine 354) is an N6-acetyllysine. The PH domain maps to 473–572 (KLIHEGCLLW…WIRVIQQSVR (100 aa)). Residues 591–619 (LRRIKTKLQQKNQALVELLQKNVELFAEM) are a coiled coil. Residues serine 646 and serine 649 each carry the phosphoserine modification. Position 680 is a phosphothreonine; by MAPK1 or MAPK3 (threonine 680). Residues serine 692, serine 710, and serine 781 each carry the phosphoserine modification. Phosphothreonine is present on threonine 795. A coiled-coil region spans residues 797-866 (EKQATELALL…RQLAALGQNE (70 aa)). Serine 885 carries the phosphoserine modification. Disordered stretches follow at residues 890–909 (DALY…DRLD) and 918–985 (HRPF…ASES). Tyrosine 893 is modified (phosphotyrosine). The residue at position 895 (serine 895) is a Phosphoserine; by PAK4. A compositionally biased stretch (basic and acidic residues) spans 919 to 938 (RPFDDREAQELGSPEDRLQD). Phosphoserine is present on residues serine 931, serine 939, and serine 940. A compositionally biased stretch (acidic residues) spans 940–949 (SDPDTGSEEE). Residue threonine 944 is modified to Phosphothreonine. A phosphoserine mark is found at serine 946, serine 951, serine 952, serine 955, and serine 959.

Found in a complex composed at least of ARHGEF2, NOD2 and RIPK2. Interacts with RIPK2; the interaction mediates tyrosine phosphorylation of RIPK2 by Src kinase CSK. Interacts with RIPK1 and RIPK3. Interacts with YWHAZ/14-3-3 zeta; when phosphorylated at Ser-885. Interacts with the kinases PAK4, AURKA and MAPK1. Interacts with RHOA and RAC1. Interacts with NOD1. Interacts (via the N- terminal zinc finger) with CAPN6 (via domain II). Interacts with DYNLT1. In terms of processing, phosphorylation of Ser-885 by PAK1 induces binding to protein YWHAZ, promoting its relocation to microtubules and the inhibition of its activity. Phosphorylated by AURKA and CDK1 during mitosis, which negatively regulates its activity. Phosphorylation by MAPK1 or MAPK3 increases nucleotide exchange activity. Phosphorylation by PAK4 releases GEF-H1 from the microtubules. Phosphorylated on serine, threonine and tyrosine residues in a RIPK2-dependent manner. In terms of tissue distribution, ubiquitous, with the exception of liver tissue. Levels are high in hemopoietic tissues (thymus, spleen, bone marrow) as well as in kidney and lung. Expressed in the germinal zones of both the neocortex and the cerebellum and in the pontine gray nuclei.

The protein localises to the cytoplasm. It is found in the cytoskeleton. Its subcellular location is the cell junction. The protein resides in the tight junction. It localises to the golgi apparatus. The protein localises to the spindle. It is found in the cytoplasmic vesicle. Activates Rho-GTPases by promoting the exchange of GDP for GTP. May be involved in epithelial barrier permeability, cell motility and polarization, dendritic spine morphology, antigen presentation, leukemic cell differentiation, cell cycle regulation, innate immune response, and cancer. Binds Rac-GTPases, but does not seem to promote nucleotide exchange activity toward Rac-GTPases. May stimulate instead the cortical activity of Rac. Inactive toward CDC42, TC10, or Ras-GTPases. Forms an intracellular sensing system along with NOD1 for the detection of microbial effectors during cell invasion by pathogens. Involved in innate immune signaling transduction pathway promoting cytokine IL6/interleukin-6 and TNF-alpha secretion in macrophage upon stimulation by bacterial peptidoglycans; acts as a signaling intermediate between NOD2 receptor and RIPK2 kinase. Contributes to the tyrosine phosphorylation of RIPK2 through Src tyrosine kinase leading to NF-kappaB activation by NOD2. Overexpression activates Rho-, but not Rac-GTPases, and increases paracellular permeability. Involved in neuronal progenitor cell division and differentiation. Involved in the migration of precerebellar neurons. This Mus musculus (Mouse) protein is Rho guanine nucleotide exchange factor 2 (Arhgef2).